A 123-amino-acid polypeptide reads, in one-letter code: MIQVQTILSVADNSGARLVMCIKVLGGSRRRYAKISDIIKIAVKEAIPRAKVKKGEVLKAVIVRTKKNLHRSDGSVLRFDKNACVLLNDSTEQPIGTRIFGPVTRELRTEKFMKIISLAPEVL.

This sequence belongs to the universal ribosomal protein uL14 family. Part of the 50S ribosomal subunit. Forms a cluster with proteins L3 and L19. In the 70S ribosome, L14 and L19 interact and together make contacts with the 16S rRNA in bridges B5 and B8.

In terms of biological role, binds to 23S rRNA. Forms part of two intersubunit bridges in the 70S ribosome. This is Large ribosomal subunit protein uL14 from Wigglesworthia glossinidia brevipalpis.